A 149-amino-acid chain; its full sequence is 3-dehydroquinate dehydratase (149 aa).

The active-site Proton acceptor is the tyrosine 22. Positions 73, 79, and 86 each coordinate substrate. Residue histidine 99 is the Proton donor of the active site. Substrate is bound by residues 100-101 and arginine 110; that span reads LS.

Belongs to the type-II 3-dehydroquinase family. Homododecamer.

It catalyses the reaction 3-dehydroquinate = 3-dehydroshikimate + H2O. It functions in the pathway metabolic intermediate biosynthesis; chorismate biosynthesis; chorismate from D-erythrose 4-phosphate and phosphoenolpyruvate: step 3/7. In terms of biological role, catalyzes a trans-dehydration via an enolate intermediate. The protein is 3-dehydroquinate dehydratase of Prochlorococcus marinus (strain MIT 9313).